The sequence spans 1191 residues: MSVRKMVAIDGNEACASVAYRVSEVAVIYPITPSSTMGELSDEWSAKGLTNIWGAVPQVVEMQSEGGAAGACHGAIQTGSLGTTFTASQGLLLMIPNMYKIAGELTPFCMHVTARTLATHALSIFGDQSDVMACRQTGFAILASASVQEAHDLASVAHGASLESRIPFLHFFDGFRTSHEVNKIELMTDDDLHAMIDDDLVAAHRARALTPDTPVTRGTAQNPDTFFQAQEARNPFYDACPAIVQSYMDRLAALTGRRYGLFDYVGHPQAERVVVIMGSGAETVAETVDWLVARGEKIGVVKVRLFRPFSVDAFVAALPVSVRAIAVLDRCKESGAIGEPLYLDVVGALARAKALGLRAGIVDPAVIGGRYGLSSKEFTPAMVKAIFDELAKANPKQAFTVGIEDDVTHLSLSVDRSFRIESADIKRSVFFGLGADGTVGANKNSIKIISDSPTIHGQGYFVYDSKKSGAITISHLRFGPRPIRAPYLIDEADFIACHHFSFLDKVDVLETAAVGATLLLNSPHDKDTVWDALPRPVQQTIIDRDLKLFVIDANKVAQETGMGQRINTIMQTCFFALSGVMPRDEAIEEIKKAISKTYARKSQKVIDANFAAVDQTLSRLQSVTIPGVLTGHALPPLVSAGAPDFVRNVTAVMLAGKGDSLPVSAMPVDGTWPTETARWEKRDIAQQVCSWDADLCIQCNKCVMVCPHAALRVKAVPAEAAAALPASMNSTPYKGKDDLKGSAYVLALSPEDCTGCGICVEACPGKDKATGARSLTMHAREDVVSACKENWEIFLDLPDVARTSLRPTVKNSQFMTPLFEFSGACQGCGETPYLKLLTQMWGDRLMIANATGCSSIYGGNLPTSPYAKDANGRGPAWSNSLFEDNAEFGLGFRLALDQHRSEAKRLLGALAPQLSGVLVDGLVANAANNDEAAIAAQRERVVSLRAELGGLTGWQARALEGLADYLVEKVVWIVGGDGWAYDIGYGGLDHVISSGRNVNILVMDTEVYSNTGGQQSKSTPIGASAKFSVAGKALPKKDLGQIAMANGHVYVASIAFGASDNQTLRALSEAVSYEGPSLIIAYSHCIAHGYDLTCGLSQQKLAIETGYWPLYRFDPRKMGVGPALSLDGVQPSRPIGDYMANEGRFRIIRDADPERYAMLLEAAEENVRSRWALLRQLAGVADEQEGARAAQ.

4Fe-4S ferredoxin-type domains lie at 687-716 and 744-773; these read QVCSWDADLCIQCNKCVMVCPHAALRVKAV and YVLALSPEDCTGCGICVEACPGKDKATGAR. Residues Cys696, Cys699, Cys702, Cys706, Cys753, Cys756, Cys759, Cys763, Cys825, Cys828, Cys853, and Cys1085 each contribute to the [4Fe-4S] cluster site.

This sequence belongs to the pyruvate:ferredoxin/flavodoxin oxidoreductase family. The cofactor is [4Fe-4S] cluster.

The catalysed reaction is oxidized [flavodoxin] + pyruvate + CoA + 2 H(+) = reduced [flavodoxin] + acetyl-CoA + CO2. Oxidoreductase required for the transfer of electrons from pyruvate to flavodoxin, which reduces nitrogenase. This chain is Pyruvate-flavodoxin oxidoreductase (nifJ), found in Rhodospirillum rubrum (strain ATCC 11170 / ATH 1.1.1 / DSM 467 / LMG 4362 / NCIMB 8255 / S1).